The chain runs to 556 residues: Glutamine--tRNA ligase (556 aa).

The short motif at 33–43 (PEPNGYLHIGH) is the 'HIGH' region element. ATP-binding positions include 34 to 36 (EPN) and 40 to 46 (HIGHAKS). D66 and Y210 together coordinate L-glutamine. Residues T229, 259–260 (RL), and 267–269 (MSK) each bind ATP. Residues 266–270 (VMSKR) carry the 'KMSKS' region motif.

This sequence belongs to the class-I aminoacyl-tRNA synthetase family. Monomer.

It is found in the cytoplasm. The enzyme catalyses tRNA(Gln) + L-glutamine + ATP = L-glutaminyl-tRNA(Gln) + AMP + diphosphate. In Clostridium kluyveri (strain ATCC 8527 / DSM 555 / NBRC 12016 / NCIMB 10680 / K1), this protein is Glutamine--tRNA ligase.